We begin with the raw amino-acid sequence, 649 residues long: Sodium/nucleoside cotransporter 1 (649 aa).

At 1–80 (MENDPSRRRE…ARSFCREHMQ (80 aa)) the chain is on the cytoplasmic side. Residues 81-104 (LFRWIGTGLLCTGLSAFLLVACLL) form a helical membrane-spanning segment. Residues 105-109 (DFQRA) are Extracellular-facing. A helical transmembrane segment spans residues 110 to 128 (LALFVLTCVVLTFLGHRLL). At 129-147 (KRLLGPKLRRFLKPQGHPR) the chain is on the cytoplasmic side. The chain crosses the membrane as a helical span at residues 148–167 (LLLWFKRGLALAAFLGLVLW). Residues 168–178 (LSLDTSQRPEQ) lie on the Extracellular side of the membrane. The chain crosses the membrane as a helical span at residues 179 to 195 (LVSFAGICVFVALLFAC). The Cytoplasmic segment spans residues 196–201 (SKHHCA). Residues 202-222 (VSWRAVSWGLGLQFVLGLLVI) traverse the membrane as a helical segment. Topologically, residues 223-261 (RTEPGFIAFEWLGEQIRIFLSYTKAGSSFVFGEALVKDV) are extracellular. A helical membrane pass occupies residues 262–283 (FAFQVLPIIVFFSCVISVLYHV). Topologically, residues 284–294 (GLMQWVILKIA) are cytoplasmic. A helical membrane pass occupies residues 295-318 (WLMQVTMGTTATETLSVAGNIFVS). Over 319-337 (QTEAPLLIRPYLADMTLSE) the chain is Extracellular. Residues 338–360 (VHVVMTGGYATIAGSLLGAYISF) traverse the membrane as a helical segment. Residues 361-366 (GIDATS) are Cytoplasmic-facing. Residues 367 to 386 (LIAASVMAAPCALALSKLVY) form a helical membrane-spanning segment. Residues 387–423 (PEVEESKFRREEGVKLTYGDAQNLIEAASTGAAISVK) are Extracellular-facing. A helical transmembrane segment spans residues 424-446 (VVANIAANLIAFLAVLDFINAAL). Over 447–457 (SWLGDMVDIQG) the chain is Cytoplasmic. The helical transmembrane segment at 458–479 (LSFQLICSYILRPVAFLMGVAW) threads the bilayer. Residues 480 to 534 (EDCPVVAELLGIKLFLNEFVAYQDLSKYKQRRLAGAEEWVGDRKQWISVRAEVLT) are Extracellular-facing. A helical membrane pass occupies residues 535-558 (TFALCGFANFSSIGIMLGGLTSMV). Residues 559–569 (PQRKSDFSQIV) lie on the Cytoplasmic side of the membrane. The helical transmembrane segment at 570–592 (LRALFTGACVSLVNACMAGILYM) threads the bilayer. Topologically, residues 593-649 (PRGAEVDCMSLLNTTLSSSSFEIYQCCREAFQSVNPEFSPEALDNCCRFYNHTICAQ) are extracellular. N-linked (GlcNAc...) asparagine glycans are attached at residues asparagine 605 and asparagine 643.

The protein belongs to the concentrative nucleoside transporter (CNT) (TC 2.A.41) family. Post-translationally, N-glycosylated. N-glycosylation is required for localization to the plasma membrane and the transporter activity. Expressed in kidney.

It is found in the cell membrane. The protein resides in the apical cell membrane. The catalysed reaction is uridine(out) + Na(+)(out) = uridine(in) + Na(+)(in). The enzyme catalyses thymidine(out) + Na(+)(out) = thymidine(in) + Na(+)(in). It carries out the reaction cytidine(out) + Na(+)(out) = cytidine(in) + Na(+)(in). It catalyses the reaction adenosine(out) + Na(+)(out) = adenosine(in) + Na(+)(in). Its activity is regulated as follows. Due to its high apparent affinity but slow transport, adenosine could act as a negative regulator of pyrimidine transport under some conditions. Functionally, sodium and pyrimidine nucleoside symporter of the plasma membrane that imports uridine, thymidine and cytidine into cells by coupling their transport to the transmembrane sodium electrochemical gradient. Also transports adenosine, an atypical substrate transported with high apparent affinity, but low maximum velocity. Therefore, exhibits the transport characteristics of the nucleoside transport system cit or N2 subtype (N2/cit). Involved in renal nucleoside (re)absorption. This Homo sapiens (Human) protein is Sodium/nucleoside cotransporter 1.